Reading from the N-terminus, the 372-residue chain is Small ribosomal subunit protein mS77 (rPPR2) (372 aa).

A mitochondrion-targeting transit peptide spans 1-28 (MKSFLLSRQAIHRISLLSSKTPTFCRNF). Residues 240–265 (DNSIRESETVDGEVEEEGFVPSDEVE) form a disordered region. Residues 248–257 (TVDGEVEEEG) are compositionally biased toward acidic residues.

As to quaternary structure, component of the mitochondrial ribosome small subunit.

It localises to the mitochondrion. Required for karyogamy during female gametophyte development, when the two polar nuclei fuse to form the diploid central cell nucleus. The polypeptide is Small ribosomal subunit protein mS77 (rPPR2) (Arabidopsis thaliana (Mouse-ear cress)).